Here is a 445-residue protein sequence, read N- to C-terminus: Ribosomal protein uS12 methylthiotransferase RimO (445 aa).

The region spanning 4-119 (YKVGMVSLGC…INEAIMNFIN (116 aa)) is the MTTase N-terminal domain. Residues Cys13, Cys48, Cys82, Cys157, Cys161, and Cys164 each coordinate [4Fe-4S] cluster. One can recognise a Radical SAM core domain in the interval 143–373 (TTDKATAYLR…MLLQKELSEE (231 aa)). A TRAM domain is found at 376–441 (KNKLGREYDV…EYDLVGVVCN (66 aa)).

The protein belongs to the methylthiotransferase family. RimO subfamily. It depends on [4Fe-4S] cluster as a cofactor.

The protein localises to the cytoplasm. It catalyses the reaction L-aspartate(89)-[ribosomal protein uS12]-hydrogen + (sulfur carrier)-SH + AH2 + 2 S-adenosyl-L-methionine = 3-methylsulfanyl-L-aspartate(89)-[ribosomal protein uS12]-hydrogen + (sulfur carrier)-H + 5'-deoxyadenosine + L-methionine + A + S-adenosyl-L-homocysteine + 2 H(+). Catalyzes the methylthiolation of an aspartic acid residue of ribosomal protein uS12. The sequence is that of Ribosomal protein uS12 methylthiotransferase RimO from Clostridium perfringens (strain SM101 / Type A).